The chain runs to 363 residues: Pyrimidine monooxygenase RutA (363 aa).

Residues 49–50 (IK), N115, E124, 140–141 (RY), and S190 contribute to the FMN site.

The protein belongs to the NtaA/SnaA/DszA monooxygenase family. RutA subfamily.

It catalyses the reaction uracil + FMNH2 + NADH + O2 = (Z)-3-ureidoacrylate + FMN + NAD(+) + H2O + H(+). The enzyme catalyses thymine + FMNH2 + NADH + O2 = (Z)-2-methylureidoacrylate + FMN + NAD(+) + H2O + H(+). Catalyzes the pyrimidine ring opening between N-3 and C-4 by an unusual flavin hydroperoxide-catalyzed mechanism, adding oxygen atoms in the process to yield ureidoacrylate peracid, that immediately reacts with FMN forming ureidoacrylate and FMN-N(5)-oxide. The FMN-N(5)-oxide reacts spontaneously with NADH to produce FMN. Requires the flavin reductase RutF to regenerate FMN in vivo. The sequence is that of Pyrimidine monooxygenase RutA from Klebsiella variicola (strain At-22).